The chain runs to 480 residues: Krueppel-like factor 10 (480 aa).

The span at 1–12 (MLNFGASLQQAS) shows a compositional bias: polar residues. Disordered stretches follow at residues 1 to 32 (MLNFGASLQQASEGKMELISEKSKEGAHPWDK), 64 to 83 (VTPVSDTSEEDSLLPGTPDL), and 97 to 146 (PSDF…APPL). The segment covering 14–32 (GKMELISEKSKEGAHPWDK) has biased composition (basic and acidic residues). S183 carries the phosphoserine modification. The tract at residues 202–222 (AAVSPNRPKPEPSTAANGAEK) is disordered. S249 bears the Phosphoserine mark. C2H2-type zinc fingers lie at residues 369 to 393 (HICSHPGCGKTYFKSSHLKAHVRTH), 399 to 423 (FSCSWKGCERRFARSDELSRHRRTH), and 429 to 451 (FACPMCDRRFMRSDHLTKHARRH).

It belongs to the Sp1 C2H2-type zinc-finger protein family. Post-translationally, ubiquitinated; mediated by SIAH1 and leading to its subsequent proteasomal degradation.

Its subcellular location is the nucleus. Transcriptional repressor which binds to the consensus sequence 5'-GGTGTG-3'. Regulates the circadian expression of genes involved in lipogenesis, gluconeogenesis, and glycolysis in the liver. Represses the expression of PCK2, a rate-limiting step enzyme of gluconeogenesis. May play a role in the cell cycle regulation. Plays a role in the regulation of the circadian clock; binds to the GC box sequence in the promoter of the core clock component ARTNL/BMAL1 and represses its transcriptional activity. The polypeptide is Krueppel-like factor 10 (Klf10) (Rattus norvegicus (Rat)).